The sequence spans 1882 residues: MSSICFAGGNHARLPSKAAYYRAISDRELDREGRFPCGCLAQYTVQAPPPAKTQEKAVGRSADLQKGNVAPLKKQRCDVVVAVSGPPPLELVYPARVGQHRLDQPSKGPLAVPSAKQTSTAMEVVLSAEEAAITAPWLLRPCKGEAPPPPPLTQRQQFAALKKRLAVKGQQIIREHIRARKAAKYAAIAKAKKAAALAAVKAAQEAPRLAAQKAAISKILRDRDVAALPPPPPPSAARLAAEAELASKAESLRRLKAFKTFSRVRPALNTSFPPPPPPPPARSSELLAAFEAAMNRSQPVQGGFSLPTRKGVYVAPTVQGVVRAGLRAQKGFLNAVSTGIVAGARILKSKSQNWFRRSMGIAHDYVEGCMASTVLGCAGPVVQRQEACSVVAAPPIVEPVLWVPPLSEYANDFPKLTCSTFTEWQRPRKQSIAISNLFRKLIDRALLVSGVSLIASVLLFEIAENFAVRQAVCPVEMPSCATSVSEKSLVSLDEGNFYLRKYLSPPPYPFGRESFYFQARPRFIGPMPSMVRAVPQIVQQPTMTEELEFEVPSSWSSPLPLFANFKVNRGACFLQVLPQRVVLPDECMDLLSLFEDQLPEGPLPSFSWSSPLPLFANFKVNRGACFLQVLPQRVVLPDECMDLLSLFEDQLPEGPLPSFSWSSPLPLFASFKVNRGACFLQVLPARKVVSDEFMDVLPFLFSPLVSHQEEEPEMVPAVLEAADSVGDITEAFFDDLECESFYDSYSDEEEAEWAEVPRCKTMSELCASLTLAGDAEGLRKSHGVFLKRLVTYLQSFEEPLYSSRAFYSVKVKPVYRPKKFEGHIDCTCLDGNMGEWEWRESVDAMWRCPGRLLNTKRTFTRDDWERVQYLRIGFNEGRYRRNWRVLNLEEMDLSLHEYPEISSAPVQSSLFSRVVDRGATLASSIPFVTRSNCQSSLGTPGLNVHTIHQEAPTTLRAPPFTGARNVMGSSDAGANAAPYRSEARKRWLSRKQEDSQEDNIKRYADKHGISFEEARAVYKAPKEGVPTQRSILPDVRDAYSARSAGARVRSLFGGSPTTRAQRTEDFVLTSPSAGDASSFSFYFNPVSEQEMAEQERGGNTMLSLDAVEVVIDPVGMPGDDTDLTVMVLWCQNSDDQRALIGAMSTFVGNGLARAVFYPGLKLLYANCRVRDGRVLKVIVSSTNSTLTHGLPQAQVSIGTLRQHLGPGHDRTISGALYASQQQGFNIRATEQGGAVTFAPQGGHVEGIPSANVQMGAGEHLIQAGPMQWRLQRSQSSRFVVSGHSRTRGSSLFTGSVDRTQQGTGAFEDPGFLPPRNSSVQGGSWQEGTEAAYLGKVTCAKDAKGGTLLHTLDIIKECKSQNLLRYKEWQRQGFLHGKLRLRCFIPTNIFCGHSMMCSLDAFGRYDSNVLGASFPVKLASLLPTEVISLADGPVVTWTFDIGRLCGHGLYYSEGAYARPKIYFLVLSDNDVPAEADWQFTYQLLFEDHTFSNSFGAVPFITLPHIFNRLDIGYWRGPTEIDLTSTPAPNAYRLLFGLSTVISGNMSTLNANQALLRFFQGSNGTLHGRIKKIGTALTTCSLLLSLRHKDASLTLETAYQRPHYILADGQGAFSLPISTPHAATSFLEDMLRLEIFAIAGPFSPKDNKAKYQFMCYFDHIELVEGVPRTIAGEQQFNWCSFRNFKIDDWKFEWPARLPDILDDKSEVLLRQHPLSLLISSTGFFTGRAIFVFQWGLNTTAGNMKGSFSARLAFGKGVEEIEQTSTVQPLVGACEARIPVEFKTYTGYTTSGPPGSMEPYIYVRLTQAKLVDRLSVNVILQEGFSFYGPSVKHFKKEVGTPSATLGTNNPVGRPPENVDTGGPGGQYAAALQAAQQAGKNPFGRG.

2 tandem repeats follow at residues 554 to 606 (SWSS…LPSF) and 607 to 659 (SWSS…LPSF). Positions 554–698 (SWSSPLPLFA…VSDEFMDVLP (145 aa)) are 2.5 X tandem repeats, Pro-rich. Residues 660-698 (SWSSPLPLFASFKVNRGACFLQVLPARKVVSDEFMDVLP) form a 3; truncated and approximate repeat. 2 stretches are compositionally biased toward polar residues: residues 1289 to 1303 (SSLF…QQGT) and 1838 to 1847 (PSATLGTNNP). 2 disordered regions span residues 1289-1320 (SSLF…SSVQ) and 1838-1863 (PSAT…PGGQ).

Belongs to the nepoviruses RNA2 polyprotein family. Post-translationally, specific enzymatic cleavages in vivo by the P1 encoded 3C-like protease yield mature proteins.

The protein localises to the host cell junction. It localises to the host plasmodesma. Its subcellular location is the virion. Functionally, protein 2A: implicated in RNA2 replication. Could also be required for nematode transmission of the virus. Its function is as follows. Transports viral genome to neighboring plant cells directly through plasmosdesmata, without any budding. The movement protein allows efficient cell to cell propagation, by bypassing the host cell wall barrier. Acts by forming a tubular structure at the host plasmodesmata, enlarging it enough to allow free passage of virion capsids. In Tomato ringspot virus (isolate raspberry) (ToRSV), this protein is RNA2 polyprotein.